The primary structure comprises 275 residues: Dihydropteroate synthase (275 aa).

One can recognise a Pterin-binding domain in the interval 15-267; it reads PQIMGILNFT…DVAATSDMLK (253 aa). Mg(2+) is bound at residue Asn22. Residues Thr62, Asp96, Asn115, Asp185, Lys221, and 255–257 contribute to the (7,8-dihydropterin-6-yl)methyl diphosphate site; that span reads RVH.

This sequence belongs to the DHPS family. As to quaternary structure, homodimer. Mg(2+) serves as cofactor.

It catalyses the reaction (7,8-dihydropterin-6-yl)methyl diphosphate + 4-aminobenzoate = 7,8-dihydropteroate + diphosphate. It functions in the pathway cofactor biosynthesis; tetrahydrofolate biosynthesis; 7,8-dihydrofolate from 2-amino-4-hydroxy-6-hydroxymethyl-7,8-dihydropteridine diphosphate and 4-aminobenzoate: step 1/2. Functionally, catalyzes the condensation of para-aminobenzoate (pABA) with 6-hydroxymethyl-7,8-dihydropterin diphosphate (DHPt-PP) to form 7,8-dihydropteroate (H2Pte), the immediate precursor of folate derivatives. The protein is Dihydropteroate synthase (folP-A) of Haemophilus influenzae (strain ATCC 51907 / DSM 11121 / KW20 / Rd).